The following is a 338-amino-acid chain: Cap-specific mRNA (nucleoside-2'-O-)-methyltransferase (338 aa).

Tyr-22 contributes to the mRNA binding site. Residues Gln-39, Tyr-66, Gly-68, Gly-72, Asp-95, Arg-97, Val-116, and Asp-138 each coordinate S-adenosyl-L-methionine. The segment at Pro-169–Ile-249 is binding to NPH-I. The segment at Pro-169–Lys-333 is binding to Rap94. Lys-175 functions as the For methyltransferase activity in the catalytic mechanism. Residues Arg-177–Phe-180, Asp-182, Ser-205–Glu-207, and Glu-233 each bind mRNA. A disordered region spans residues His-305–Thr-338. The span at Arg-323 to Thr-338 shows a compositional bias: basic residues.

The protein belongs to the class I-like SAM-binding methyltransferase superfamily. Poxvirus/kinetoplastid 2'-O-MTase family. As to quaternary structure, interacts with poly(A) polymerase catalytic subunit OPG063. Interacts with OPG109 and OPG123; these interactions might help linking transcription to capping and polyadenylation.

The protein resides in the virion. The enzyme catalyses a 5'-end (N(7)-methyl 5'-triphosphoguanosine)-ribonucleoside in mRNA + S-adenosyl-L-methionine = a 5'-end (N(7)-methyl 5'-triphosphoguanosine)-(2'-O-methyl-ribonucleoside) in mRNA + S-adenosyl-L-homocysteine + H(+). Functionally, displays methyltransferase, positive regulation of the poly(A) polymerase and transcription elongation activities. Involved in the modification of both mRNA ends and in intermediate and late gene positive transcription elongation. At the mRNAs 5' end, methylates the ribose 2' OH group of the first transcribed nucleotide, thereby producing a 2'-O-methylpurine cap. At the 3' end, functions as a processivity factor which stimulates the activity of the viral poly(A) polymerase OPG063 that creates mRNA's poly(A) tail. In the presence of OPG102, OPG063 does not dissociate from the RNA allowing tail elongation to around 250 adenylates. The protein is Cap-specific mRNA (nucleoside-2'-O-)-methyltransferase (OPG102) of Oryctolagus cuniculus (Rabbit).